The primary structure comprises 73 residues: Large ribosomal subunit protein uL29 (73 aa).

This sequence belongs to the universal ribosomal protein uL29 family.

This is Large ribosomal subunit protein uL29 (rpl29) from Saccharolobus solfataricus (strain ATCC 35092 / DSM 1617 / JCM 11322 / P2) (Sulfolobus solfataricus).